A 338-amino-acid polypeptide reads, in one-letter code: Calcium uniporter protein 4, mitochondrial (338 aa).

A mitochondrion-targeting transit peptide spans 1–36 (MVMMKKLLSNRLFNMSKTASQSLMNCRTSSSSSLAM). Residues 233–253 (LWAGLGYLIIQTAGFMRLTFW) traverse the membrane as a helical segment. The Selectivity filter signature appears at 257-265 (WDVMEPICF). Residue E261 participates in Ca(2+) binding. The chain crosses the membrane as a helical span at residues 263–280 (ICFYVSSVYFMAGYTFFL).

Belongs to the MCU (TC 1.A.77) family.

The protein resides in the mitochondrion inner membrane. The enzyme catalyses Ca(2+)(in) = Ca(2+)(out). Its function is as follows. Mitochondrial inner membrane calcium uniporter that mediates calcium uptake into mitochondria. Constitutes a pore-forming and calcium-conducting subunit. Mitochondrial calcium homeostasis plays key roles in cellular physiology and regulates cell bioenergetics, cytoplasmic calcium signals and activation of cell death pathways. In Arabidopsis thaliana (Mouse-ear cress), this protein is Calcium uniporter protein 4, mitochondrial.